The sequence spans 201 residues: Recombination protein RecR (201 aa).

The C4-type zinc finger occupies 58–73 (CPECGLLTEEERCGLC). The region spanning 81–176 (TLLCVVESSA…RTTRIAHGVP (96 aa)) is the Toprim domain.

This sequence belongs to the RecR family.

In terms of biological role, may play a role in DNA repair. It seems to be involved in an RecBC-independent recombinational process of DNA repair. It may act with RecF and RecO. In Halorhodospira halophila (strain DSM 244 / SL1) (Ectothiorhodospira halophila (strain DSM 244 / SL1)), this protein is Recombination protein RecR.